We begin with the raw amino-acid sequence, 325 residues long: Eukaryotic translation initiation factor 3 subunit I (325 aa).

WD repeat units follow at residues 8–47, 50–89, 144–183, 186–225, and 283–324; these read GHERSITQIKYNRDGDLLFTVAKDPVVNVWYSVNGERLGT, GHTGAVWCVDVDWDTRHVLSGSADNSCRLWDCETGKQLAL, CSESKITSAVWGPLGENIIAGHENGELNQYSAKSGEIVNS, EHSKQINDIQTSRDMTMFVTASKDCTSKLFDSTSLEHQKT, and GHFG…FEFE.

It belongs to the eIF-3 subunit I family. In terms of assembly, component of the eukaryotic translation initiation factor 3 (eIF-3) complex, which is composed of 13 subunits: eif3a, eif3b, eif3c, eif3d, eif3e, eif3f, eif3g, eif3h, eif3i, eif3j, eif3k, eif3l and eif3m.

The protein localises to the cytoplasm. Its function is as follows. Component of the eukaryotic translation initiation factor 3 (eIF-3) complex, which is involved in protein synthesis of a specialized repertoire of mRNAs and, together with other initiation factors, stimulates binding of mRNA and methionyl-tRNAi to the 40S ribosome. The eIF-3 complex specifically targets and initiates translation of a subset of mRNAs involved in cell proliferation. The protein is Eukaryotic translation initiation factor 3 subunit I (eif3i) of Xenopus tropicalis (Western clawed frog).